We begin with the raw amino-acid sequence, 178 residues long: Neuroblastoma suppressor of tumorigenicity 1 (178 aa).

An N-terminal signal peptide occupies residues Met-1–Ala-16. 5 disulfides stabilise this stretch: Cys-34/Cys-84, Cys-48/Cys-98, Cys-58/Cys-117, Cys-62/Cys-119, and Cys-81/Cys-122. A CTCK domain is found at Cys-34–Gly-123. A disordered region spans residues Asn-132 to Asp-178. Over residues Ser-140–Pro-160 the composition is skewed to low complexity.

It belongs to the DAN family. In terms of assembly, homodimer.

The protein localises to the secreted. Possible candidate as a tumor suppressor gene of neuroblastoma. May play an important role in preventing cells from entering the final stage (G1/S) of the transformation process. This Mus musculus (Mouse) protein is Neuroblastoma suppressor of tumorigenicity 1 (Nbl1).